Consider the following 364-residue polypeptide: DNA replication and repair protein RecF (364 aa).

30-37 (GENGSGKT) is an ATP binding site.

It belongs to the RecF family.

It localises to the cytoplasm. The RecF protein is involved in DNA metabolism; it is required for DNA replication and normal SOS inducibility. RecF binds preferentially to single-stranded, linear DNA. It also seems to bind ATP. This chain is DNA replication and repair protein RecF, found in Xylella fastidiosa (strain M12).